The primary structure comprises 262 residues: Abhydrolase domain-containing protein AFT2-1 (262 aa).

The Peroxisomal targeting signal type 1 signature appears at 260 to 262; sequence SKL.

It belongs to the AB hydrolase superfamily. AKT2 hydrolase family.

Its subcellular location is the peroxisome. The protein operates within mycotoxin biosynthesis. Abhydrolase domain-containing protein; part of the gene clusters that mediate the biosynthesis of the host-selective toxins (HSTs) AF-toxins responsible for Alternaria black spot of strawberry disease by the strawberry pathotype. AF-toxin I and III are valine derivatives of 2,3-dyhydroxy-isovaleric acid and 2-hydroxy-isovaleric acid respectively, while AF II is an isoleucine derivative of 2-hydroxy-valeric acid. These derivatives are bound to a 9,10-epoxy-8-hydroxy-9-methyl-decatrienoic acid (EDA) moiety. On cellular level, AF-toxins affect plasma membrane of susceptible cells and cause a sudden increase in loss of K(+) after a few minutes of toxin treatment. The aldo-keto reductase AFTS1 catalyzes the conversion of 2-keto-isovaleric acid (2-KIV) to 2-hydroxy-isovaleric acid (2-HIV) by reduction of its ketone to an alcohol. The acyl-CoA ligase AFT1, the hydrolase AFT2 and the enoyl-CoA hydratases AFT3 and AFT6, but also the polyketide synthase AFT9, the acyl-CoA dehydrogenase AFT10, the cytochrome P450 monooxygenase AFT11 and the oxidoreductase AFT12 are all involved in the biosynthesis of the AK-, AF- and ACT-toxin common EDA structural moiety. The exact function of each enzyme, and of additional enzymes identified within the AF-toxin clusters have still to be determined. The protein is Abhydrolase domain-containing protein AFT2-1 of Alternaria alternata (Alternaria rot fungus).